We begin with the raw amino-acid sequence, 475 residues long: Ammonium transporter 2 (475 aa).

The next 11 membrane-spanning stretches (helical) occupy residues 27 to 47, 55 to 75, 120 to 140, 148 to 168, 183 to 203, 218 to 238, 254 to 274, 279 to 299, 302 to 322, 336 to 356, and 389 to 409; these read AATLVGLQSMPGLVILYASIV, SAFMALYAFAAVLLCWVLLCY, LVYFQFTFAAITTILVAGSVL, WMAFVPLWLIFSYTVGAYSIW, GGYVIHLSSGVAGFVAAYWVG, VLLMLAGAGLLWMGWSGFNGG, TNLSAATSLLVWTTLDVIFFG, IGAIQGMVTGLAGVTPGAGLI, WAAIIIGVVSGTAPWASMMII, LAVFYTHAVAGLLGGIMTGLF, and AGAAFIAVWNVVSTTIILLAI.

Belongs to the ammonia transporter channel (TC 1.A.11.2) family. In terms of tissue distribution, higher expression in shoots than roots.

The protein resides in the cell membrane. Functionally, high affinity ammonium transporter that may play an important role in moving ammonium between the apoplast and symplast of cells throughout the plant. Does not transport methylammonium. This chain is Ammonium transporter 2 (AMT2), found in Arabidopsis thaliana (Mouse-ear cress).